Here is a 943-residue protein sequence, read N- to C-terminus: Isoleucine--tRNA ligase (943 aa).

Residues Pro58–His68 carry the 'HIGH' region motif. Glu567 contacts L-isoleucyl-5'-AMP. The short motif at Lys608–Ser612 is the 'KMSKS' region element. Lys611 is a binding site for ATP. Residues Cys906, Cys909, Cys926, and Cys929 each coordinate Zn(2+).

The protein belongs to the class-I aminoacyl-tRNA synthetase family. IleS type 1 subfamily. Monomer. Zn(2+) is required as a cofactor.

Its subcellular location is the cytoplasm. It carries out the reaction tRNA(Ile) + L-isoleucine + ATP = L-isoleucyl-tRNA(Ile) + AMP + diphosphate. Functionally, catalyzes the attachment of isoleucine to tRNA(Ile). As IleRS can inadvertently accommodate and process structurally similar amino acids such as valine, to avoid such errors it has two additional distinct tRNA(Ile)-dependent editing activities. One activity is designated as 'pretransfer' editing and involves the hydrolysis of activated Val-AMP. The other activity is designated 'posttransfer' editing and involves deacylation of mischarged Val-tRNA(Ile). The chain is Isoleucine--tRNA ligase from Pseudomonas fluorescens (strain ATCC BAA-477 / NRRL B-23932 / Pf-5).